The following is a 362-amino-acid chain: Sulfoquinovose monooxygenase (362 aa).

It belongs to the SsuD family.

The catalysed reaction is 6-sulfo-D-quinovose + FMNH2 + O2 = 6-dehydro-D-glucose + FMN + sulfite + H2O + 2 H(+). Its function is as follows. Part of the alkanesulfonate monooxygenase (sulfo-ASMO) pathway, a D-sulfoquinovose degradation pathway that enables the complete utilization of all carbons within sulfoquinovose (SQ) with concomitant production of inorganic sulfite. Catalyzes the oxidative desulfurization of sulfoquinovose to sulfite and 6-dehydro-D-glucose. The polypeptide is Sulfoquinovose monooxygenase (Novosphingobium aromaticivorans (strain ATCC 700278 / DSM 12444 / CCUG 56034 / CIP 105152 / NBRC 16084 / F199)).